Reading from the N-terminus, the 154-residue chain is Ribonuclease 8 (154 aa).

The N-terminal stretch at 1 to 27 (MAPARAGCCPLLLLLLGLRVAQIPVSA) is a signal peptide. Residue H42 is the Proton acceptor of the active site. Intrachain disulfides connect C64–C118, C82–C133, and C89–C96. Substrate is bound by residues 65 to 69 (KDLNT) and K90. Residue H149 is the Proton donor of the active site.

Belongs to the pancreatic ribonuclease family.

It is found in the secreted. Has a low ribonuclease activity. This is Ribonuclease 8 (RNASE8) from Miopithecus talapoin (Angolan talapoin).